We begin with the raw amino-acid sequence, 112 residues long: Divalent-cation tolerance protein CutA (112 aa).

Cu cation contacts are provided by Cys16, His83, and His84.

This sequence belongs to the CutA family. In terms of assembly, homotrimer. Cu cation is required as a cofactor.

Its subcellular location is the cytoplasm. In terms of biological role, involved in resistance toward heavy metals. The protein is Divalent-cation tolerance protein CutA of Shigella boydii serotype 18 (strain CDC 3083-94 / BS512).